Here is a 194-residue protein sequence, read N- to C-terminus: ATP-dependent Clp protease proteolytic subunit (194 aa).

Serine 98 (nucleophile) is an active-site residue. Histidine 123 is a catalytic residue.

It belongs to the peptidase S14 family. Fourteen ClpP subunits assemble into 2 heptameric rings which stack back to back to give a disk-like structure with a central cavity, resembling the structure of eukaryotic proteasomes.

It is found in the cytoplasm. The catalysed reaction is Hydrolysis of proteins to small peptides in the presence of ATP and magnesium. alpha-casein is the usual test substrate. In the absence of ATP, only oligopeptides shorter than five residues are hydrolyzed (such as succinyl-Leu-Tyr-|-NHMec, and Leu-Tyr-Leu-|-Tyr-Trp, in which cleavage of the -Tyr-|-Leu- and -Tyr-|-Trp bonds also occurs).. Functionally, cleaves peptides in various proteins in a process that requires ATP hydrolysis. Has a chymotrypsin-like activity. Plays a major role in the degradation of misfolded proteins. This is ATP-dependent Clp protease proteolytic subunit from Acetivibrio thermocellus (strain ATCC 27405 / DSM 1237 / JCM 9322 / NBRC 103400 / NCIMB 10682 / NRRL B-4536 / VPI 7372) (Clostridium thermocellum).